A 325-amino-acid chain; its full sequence is Elongation factor P--(R)-beta-lysine ligase (325 aa).

Ser76–Glu78 serves as a coordination point for substrate. Residues Arg100–Glu102 and Asn109 contribute to the ATP site. Residue Tyr118 coordinates substrate. Glu244–Leu245 provides a ligand contact to ATP. Glu251 is a binding site for substrate. Gly300 lines the ATP pocket.

It belongs to the class-II aminoacyl-tRNA synthetase family. EpmA subfamily. Homodimer.

The catalysed reaction is D-beta-lysine + L-lysyl-[protein] + ATP = N(6)-((3R)-3,6-diaminohexanoyl)-L-lysyl-[protein] + AMP + diphosphate + H(+). In terms of biological role, with EpmB is involved in the beta-lysylation step of the post-translational modification of translation elongation factor P (EF-P) on 'Lys-34'. Catalyzes the ATP-dependent activation of (R)-beta-lysine produced by EpmB, forming a lysyl-adenylate, from which the beta-lysyl moiety is then transferred to the epsilon-amino group of EF-P 'Lys-34'. The chain is Elongation factor P--(R)-beta-lysine ligase from Salmonella choleraesuis (strain SC-B67).